Consider the following 701-residue polypeptide: Elongation factor G (701 aa).

Residues Ala-10–Leu-290 enclose the tr-type G domain. GTP-binding positions include Ala-19 to Thr-26, Asp-83 to His-87, and Asn-137 to Asp-140.

It belongs to the TRAFAC class translation factor GTPase superfamily. Classic translation factor GTPase family. EF-G/EF-2 subfamily.

Its subcellular location is the cytoplasm. In terms of biological role, catalyzes the GTP-dependent ribosomal translocation step during translation elongation. During this step, the ribosome changes from the pre-translocational (PRE) to the post-translocational (POST) state as the newly formed A-site-bound peptidyl-tRNA and P-site-bound deacylated tRNA move to the P and E sites, respectively. Catalyzes the coordinated movement of the two tRNA molecules, the mRNA and conformational changes in the ribosome. This chain is Elongation factor G, found in Tropheryma whipplei (strain TW08/27) (Whipple's bacillus).